The following is a 348-amino-acid chain: Lipoyl synthase (348 aa).

7 residues coordinate [4Fe-4S] cluster: C55, C60, C66, C81, C85, C88, and S292. The region spanning 67–281 (WESREATFLI…ADAAKEMGFA (215 aa)) is the Radical SAM core domain.

The protein belongs to the radical SAM superfamily. Lipoyl synthase family. [4Fe-4S] cluster serves as cofactor.

The protein localises to the cytoplasm. The enzyme catalyses [[Fe-S] cluster scaffold protein carrying a second [4Fe-4S](2+) cluster] + N(6)-octanoyl-L-lysyl-[protein] + 2 oxidized [2Fe-2S]-[ferredoxin] + 2 S-adenosyl-L-methionine + 4 H(+) = [[Fe-S] cluster scaffold protein] + N(6)-[(R)-dihydrolipoyl]-L-lysyl-[protein] + 4 Fe(3+) + 2 hydrogen sulfide + 2 5'-deoxyadenosine + 2 L-methionine + 2 reduced [2Fe-2S]-[ferredoxin]. The protein operates within protein modification; protein lipoylation via endogenous pathway; protein N(6)-(lipoyl)lysine from octanoyl-[acyl-carrier-protein]: step 2/2. Catalyzes the radical-mediated insertion of two sulfur atoms into the C-6 and C-8 positions of the octanoyl moiety bound to the lipoyl domains of lipoate-dependent enzymes, thereby converting the octanoylated domains into lipoylated derivatives. In Corynebacterium glutamicum (strain R), this protein is Lipoyl synthase.